We begin with the raw amino-acid sequence, 148 residues long: uncharacterized protein (148 aa).

The N-terminal stretch at 1–18 is a signal peptide; the sequence is MKIILTVLAGVGLLSAGG. Cys19 carries the N-palmitoyl cysteine lipid modification. Residue Cys19 is the site of S-diacylglycerol cysteine attachment.

It is found in the cell membrane. This is an uncharacterized protein from Bacillus subtilis (strain 168).